An 88-amino-acid polypeptide reads, in one-letter code: Small ribosomal subunit protein uS15 (88 aa).

Belongs to the universal ribosomal protein uS15 family. In terms of assembly, part of the 30S ribosomal subunit. Forms a bridge to the 50S subunit in the 70S ribosome, contacting the 23S rRNA.

Its function is as follows. One of the primary rRNA binding proteins, it binds directly to 16S rRNA where it helps nucleate assembly of the platform of the 30S subunit by binding and bridging several RNA helices of the 16S rRNA. Functionally, forms an intersubunit bridge (bridge B4) with the 23S rRNA of the 50S subunit in the ribosome. In Caldicellulosiruptor saccharolyticus (strain ATCC 43494 / DSM 8903 / Tp8T 6331), this protein is Small ribosomal subunit protein uS15.